The sequence spans 190 residues: Female-specific histamine-binding protein 2 (190 aa).

Positions 1-19 (MKLLILSLALVLALSQVKG) are cleaved as a signal peptide. Positions 39, 43, 55, 58, 61, 101, 117, 119, 127, 139, 154, and 156 each coordinate histamine. 2 cysteine pairs are disulfide-bonded: Cys67/Cys188 and Cys138/Cys167.

Belongs to the calycin superfamily. Histamine-binding salivary protein family. As to quaternary structure, monomer. In terms of tissue distribution, expressed in salivary glands.

The protein resides in the secreted. In terms of biological role, salivary tick protein that acts by scavenging histamine at the wound site, outcompeting histamine receptors for histamine, thereby overcoming host inflammatory responses. Binds histamine with a high-affinity (Kd=1.7 nM). Contains two binding histamine sites (H and L), that appear to bind histamine with differing affinities (high and low). The sequence is that of Female-specific histamine-binding protein 2 from Rhipicephalus appendiculatus (Brown ear tick).